The primary structure comprises 701 residues: CRS2-associated factor 1, chloroplastic (701 aa).

Residues 1–77 constitute a chloroplast transit peptide; the sequence is MATSHLTSRS…ENGEPAAGVR (77 aa). 2 consecutive CRM domains span residues 183 to 279 and 301 to 397; these read EPLT…TRPI and DGLT…LPPL. The tract at residues 581-603 is CRS2 binding; it reads GILLLFKQAIDSGMALVLNENEF.

As to quaternary structure, interacts with CRS2 and RNA. Part of large ribonucleo-protein complexes that include group IIB introns, CRS2 and CAF1.

It localises to the plastid. Its subcellular location is the chloroplast stroma. Required for the splicing of group IIB introns in chloroplasts. Forms splicing particles with CRS2. Interacts with RNA and confers intron specificity of the splicing particles. This Oryza sativa subsp. japonica (Rice) protein is CRS2-associated factor 1, chloroplastic.